Reading from the N-terminus, the 253-residue chain is Serine/threonine-protein phosphatase 3 (253 aa).

Mn(2+) serves as cofactor. Phosphorylated by YegI.

The catalysed reaction is O-phospho-L-seryl-[protein] + H2O = L-seryl-[protein] + phosphate. The enzyme catalyses O-phospho-L-threonyl-[protein] + H2O = L-threonyl-[protein] + phosphate. Its activity is regulated as follows. Activity dramatically decreases in the presence of the general protein phosphatase inhibitor sodium phosphate. Slightly inhibited by sodium fluoride. Activity decreases in the presence of the metal chelator EDTA. In terms of biological role, PP2C-like phosphatase that can dephosphorylate YegI. In vitro, can hydrolyze p-nitrophenyl phosphate (pNPP) to p-nitrophenol. This is Serine/threonine-protein phosphatase 3 from Escherichia coli (strain K12).